Here is a 452-residue protein sequence, read N- to C-terminus: Chaperone SurA (452 aa).

An N-terminal signal peptide occupies residues 1–28 (MKKTLRFAAVVSSLAAASALLAAAPAAA). 2 PpiC domains span residues 186–288 (QQDL…RLVD) and 302–400 (IVQT…QVLS).

The protein localises to the periplasm. It catalyses the reaction [protein]-peptidylproline (omega=180) = [protein]-peptidylproline (omega=0). In terms of biological role, chaperone involved in the correct folding and assembly of outer membrane proteins. Recognizes specific patterns of aromatic residues and the orientation of their side chains, which are found more frequently in integral outer membrane proteins. May act in both early periplasmic and late outer membrane-associated steps of protein maturation. This is Chaperone SurA from Burkholderia lata (strain ATCC 17760 / DSM 23089 / LMG 22485 / NCIMB 9086 / R18194 / 383).